Reading from the N-terminus, the 474-residue chain is tRNA-2-methylthio-N(6)-dimethylallyladenosine synthase (474 aa).

An MTTase N-terminal domain is found at Lys-3–Gly-120. Cys-12, Cys-49, Cys-83, Cys-157, Cys-161, and Cys-164 together coordinate [4Fe-4S] cluster. One can recognise a Radical SAM core domain in the interval Arg-143 to Ala-375. In terms of domain architecture, TRAM spans Arg-378–Arg-441.

It belongs to the methylthiotransferase family. MiaB subfamily. Monomer. Requires [4Fe-4S] cluster as cofactor.

Its subcellular location is the cytoplasm. It carries out the reaction N(6)-dimethylallyladenosine(37) in tRNA + (sulfur carrier)-SH + AH2 + 2 S-adenosyl-L-methionine = 2-methylsulfanyl-N(6)-dimethylallyladenosine(37) in tRNA + (sulfur carrier)-H + 5'-deoxyadenosine + L-methionine + A + S-adenosyl-L-homocysteine + 2 H(+). Functionally, catalyzes the methylthiolation of N6-(dimethylallyl)adenosine (i(6)A), leading to the formation of 2-methylthio-N6-(dimethylallyl)adenosine (ms(2)i(6)A) at position 37 in tRNAs that read codons beginning with uridine. This is tRNA-2-methylthio-N(6)-dimethylallyladenosine synthase from Citrobacter koseri (strain ATCC BAA-895 / CDC 4225-83 / SGSC4696).